A 153-amino-acid chain; its full sequence is Large ribosomal subunit protein uL13 (153 aa).

Residues 134 to 153 form a disordered region; sequence EAQQPQALDVGSLNRKNVSA.

Belongs to the universal ribosomal protein uL13 family. Part of the 50S ribosomal subunit.

Functionally, this protein is one of the early assembly proteins of the 50S ribosomal subunit, although it is not seen to bind rRNA by itself. It is important during the early stages of 50S assembly. The chain is Large ribosomal subunit protein uL13 from Methylorubrum extorquens (strain CM4 / NCIMB 13688) (Methylobacterium extorquens).